The following is a 340-amino-acid chain: Cytochrome c oxidase subunit 1 (340 aa).

The helical transmembrane segment at 18–38 threads the bilayer; it reads MCYLLVAILCGFLGYIYSLFI. 2 residues coordinate Ca(2+): Glu-41 and Gly-46. The chain crosses the membrane as a helical span at residues 42 to 62; sequence LSIIGCGVLFGDYQYYNVLVT. His-64 is a Fe(II)-heme a binding site. A run of 7 helical transmembrane segments spans residues 66 to 86, 100 to 120, 148 to 168, 186 to 206, 237 to 257, 279 to 299, and 305 to 325; these read LVMVFAFIMPVMMGGLVNYFV, LNNMSFWMFMGGFGALVSGLL, FTVFAVHLLGVSSILNSINLL, LFIWGSLITALLLIITLPVLA, LFWFFGHPEVYIIIIPVFGLI, MILIAILGFFVWAHHMFVVGM, and AYFGSVTVLIGLPTCIKLFNW. His-243 contributes to the Cu cation binding site. The segment at residues 243–247 is a cross-link (1'-histidyl-3'-tyrosine (His-Tyr)); sequence HPEVY. Tyr-247 serves as a coordination point for O2. Residues His-292 and His-293 each coordinate Cu cation.

It belongs to the heme-copper respiratory oxidase family. Component of the cytochrome c oxidase (complex IV, CIV), a multisubunit enzyme composed of a catalytic core of 3 subunits and several supernumerary subunits. The complex exists as a monomer or a dimer and forms supercomplexes (SCs) in the inner mitochondrial membrane with ubiquinol-cytochrome c oxidoreductase (cytochrome b-c1 complex, complex III, CIII). The cofactor is heme. Requires Cu cation as cofactor.

Its subcellular location is the mitochondrion inner membrane. It carries out the reaction 4 Fe(II)-[cytochrome c] + O2 + 8 H(+)(in) = 4 Fe(III)-[cytochrome c] + 2 H2O + 4 H(+)(out). It participates in energy metabolism; oxidative phosphorylation. Component of the cytochrome c oxidase, the last enzyme in the mitochondrial electron transport chain which drives oxidative phosphorylation. The respiratory chain contains 3 multisubunit complexes succinate dehydrogenase (complex II, CII), ubiquinol-cytochrome c oxidoreductase (cytochrome b-c1 complex, complex III, CIII) and cytochrome c oxidase (complex IV, CIV), that cooperate to transfer electrons derived from NADH and succinate to molecular oxygen, creating an electrochemical gradient over the inner membrane that drives transmembrane transport and the ATP synthase. Cytochrome c oxidase is the component of the respiratory chain that catalyzes the reduction of oxygen to water. Electrons originating from reduced cytochrome c in the intermembrane space (IMS) are transferred via the dinuclear copper A center (CU(A)) of subunit 2 and heme A of subunit 1 to the active site in subunit 1, a binuclear center (BNC) formed by heme A3 and copper B (CU(B)). The BNC reduces molecular oxygen to 2 water molecules using 4 electrons from cytochrome c in the IMS and 4 protons from the mitochondrial matrix. The chain is Cytochrome c oxidase subunit 1 (COI) from Strigomonas oncopelti (Parasitic flagellate).